Reading from the N-terminus, the 305-residue chain is Serine/threonine-protein phosphatase 4 catalytic subunit (305 aa).

The Mn(2+) site is built by Asp52, His54, Asp80, and Asn112. Residue His113 is the Proton donor of the active site. Mn(2+) is bound by residues His162 and His236.

This sequence belongs to the PPP phosphatase family. PP-4 (PP-X) subfamily. As to quaternary structure, serine/threonine-protein phosphatase 4 (PP4) occurs in different assemblies of the catalytic and one or more regulatory subunits. Probably part of a PP4 complex containing ppp4c and ppp4r2. Interacts with smkA. Mn(2+) is required as a cofactor.

It is found in the cytoplasm. The protein resides in the nucleus. It carries out the reaction O-phospho-L-seryl-[protein] + H2O = L-seryl-[protein] + phosphate. The enzyme catalyses O-phospho-L-threonyl-[protein] + H2O = L-threonyl-[protein] + phosphate. Its function is as follows. Required for development, chemotaxis and the expression of numerous genes. The sequence is that of Serine/threonine-protein phosphatase 4 catalytic subunit (ppp4c) from Dictyostelium discoideum (Social amoeba).